A 284-amino-acid chain; its full sequence is Spermidine synthase (284 aa).

Residues 6 to 241 form the PABS domain; that stretch reads NGWFSEISEF…GSIGFILCSL (236 aa). An S-adenosyl 3-(methylsulfanyl)propylamine-binding site is contributed by Gln37. Tyr67 contributes to the putrescine binding site. Residues Gln68, Asp92, Glu112, 143-144, and Asp161 each bind S-adenosyl 3-(methylsulfanyl)propylamine; that span reads DG. Asp161 acts as the Proton acceptor in catalysis. Putrescine is bound by residues 161-164 and Tyr229; that span reads DSSD.

The protein belongs to the spermidine/spermine synthase family.

The enzyme catalyses S-adenosyl 3-(methylsulfanyl)propylamine + putrescine = S-methyl-5'-thioadenosine + spermidine + H(+). Its pathway is amine and polyamine biosynthesis; spermidine biosynthesis; spermidine from putrescine: step 1/1. Catalyzes the production of spermidine from putrescine and decarboxylated S-adenosylmethionine (dcSAM). Has a strong preference for putrescine as substrate. The chain is Spermidine synthase (spsA) from Dictyostelium discoideum (Social amoeba).